Here is a 38-residue protein sequence, read N- to C-terminus: Photosystem I reaction center subunit IX (38 aa).

Residues 4–24 (FLTTAPVVAAIWFTLTAGILI) traverse the membrane as a helical segment.

This sequence belongs to the PsaJ family.

It localises to the cellular thylakoid membrane. In terms of biological role, may help in the organization of the PsaE and PsaF subunits. The polypeptide is Photosystem I reaction center subunit IX (Parasynechococcus marenigrum (strain WH8102)).